The following is a 302-amino-acid chain: Glutaminase (302 aa).

Residues Ser-61, Asn-111, Glu-155, Asn-162, Tyr-186, Tyr-238, and Val-256 each contribute to the substrate site.

Belongs to the glutaminase family. In terms of assembly, homotetramer.

The enzyme catalyses L-glutamine + H2O = L-glutamate + NH4(+). The sequence is that of Glutaminase from Ectopseudomonas mendocina (strain ymp) (Pseudomonas mendocina).